A 154-amino-acid polypeptide reads, in one-letter code: Deoxyuridine 5'-triphosphate nucleotidohydrolase (154 aa).

Substrate is bound by residues R64–G66, N77, T81–D83, and K91.

The protein belongs to the dUTPase family. Homotrimer. Mg(2+) is required as a cofactor.

It catalyses the reaction dUTP + H2O = dUMP + diphosphate + H(+). The protein operates within pyrimidine metabolism; dUMP biosynthesis; dUMP from dCTP (dUTP route): step 2/2. Functionally, this enzyme is involved in nucleotide metabolism: it produces dUMP, the immediate precursor of thymidine nucleotides and it decreases the intracellular concentration of dUTP so that uracil cannot be incorporated into DNA. This is Deoxyuridine 5'-triphosphate nucleotidohydrolase from Mycobacterium leprae (strain Br4923).